Here is a 220-residue protein sequence, read N- to C-terminus: Probable septum site-determining protein MinC (220 aa).

Belongs to the MinC family. Interacts with MinD and FtsZ.

Cell division inhibitor that blocks the formation of polar Z ring septums. Rapidly oscillates between the poles of the cell to destabilize FtsZ filaments that have formed before they mature into polar Z rings. Prevents FtsZ polymerization. The chain is Probable septum site-determining protein MinC from Vibrio campbellii (strain ATCC BAA-1116).